Reading from the N-terminus, the 304-residue chain is Non-specific ribonucleoside hydrolase RihC (304 aa).

His233 is an active-site residue.

The protein belongs to the IUNH family. RihC subfamily.

In terms of biological role, hydrolyzes both purine and pyrimidine ribonucleosides with a broad-substrate specificity. This chain is Non-specific ribonucleoside hydrolase RihC, found in Escherichia coli O139:H28 (strain E24377A / ETEC).